The chain runs to 243 residues: UPF0246 protein Sez_1855 (243 aa).

Belongs to the UPF0246 family.

The protein is UPF0246 protein Sez_1855 of Streptococcus equi subsp. zooepidemicus (strain MGCS10565).